Here is a 382-residue protein sequence, read N- to C-terminus: MNLKEKTRALFAEIFGYPATHTIQAPGRVNLIGEHTDYNDGFVLPCAIDYQTVISCAPRDDRTVRVIAADYDNQVDEFSLDAPIVTHDSQQWSNYVRGVVKHLQQRNNAFGGVDMVISGNVPQGAGLSSSASLEVAVGTVFQQLYHLPLDGAQIALNGQEAENQFVGCNCGIMDQLISALGKKDHALLIDCRTLGAKAVSMPKGVAVVIINSNFKRTLVGSEYNTRREQCETGARFFQQPALRDVSLEAFNAVASELDPVVAKRVRHVLSENARTVEAASALEKGDLQRMGQLMAESHASMRDDFEITVPQIDTLVDIVKATIGDRGGVRMTGGGFGGCVVALIPEDLVPAVRQAVAQQYEAKTGIKETFYVCKPSQGAGQC.

Position 34 to 37 (34 to 37) interacts with substrate; the sequence is EHTD. ATP is bound at residue 124–130; sequence GAGLSSS. Residues Ser-130 and Glu-162 each contribute to the Mg(2+) site. Asp-174 acts as the Proton acceptor in catalysis. Tyr-223 lines the substrate pocket.

It belongs to the GHMP kinase family. GalK subfamily.

It localises to the cytoplasm. The enzyme catalyses alpha-D-galactose + ATP = alpha-D-galactose 1-phosphate + ADP + H(+). The protein operates within carbohydrate metabolism; galactose metabolism. Catalyzes the transfer of the gamma-phosphate of ATP to D-galactose to form alpha-D-galactose-1-phosphate (Gal-1-P). This is Galactokinase from Salmonella newport (strain SL254).